We begin with the raw amino-acid sequence, 154 residues long: Superoxide dismutase [Cu-Zn] (154 aa).

Cu cation is bound by residues histidine 47, histidine 49, and histidine 64. A disulfide bridge connects residues cysteine 58 and cysteine 147. Zn(2+)-binding residues include histidine 64, histidine 72, histidine 81, and aspartate 84. Histidine 121 is a Cu cation binding site. Arginine 144 contacts substrate.

It belongs to the Cu-Zn superoxide dismutase family. Homodimer. Cu cation serves as cofactor. Requires Zn(2+) as cofactor.

Its subcellular location is the cytoplasm. It is found in the mitochondrion. The protein localises to the cell membrane. The enzyme catalyses 2 superoxide + 2 H(+) = H2O2 + O2. Functionally, destroys radicals which are normally produced within the cells and which are toxic to biological systems. Destroys radicals produced by host defense mechanisms. The chain is Superoxide dismutase [Cu-Zn] from Cryptococcus neoformans var. grubii serotype A (strain H99 / ATCC 208821 / CBS 10515 / FGSC 9487) (Filobasidiella neoformans var. grubii).